We begin with the raw amino-acid sequence, 331 residues long: Germ cell-specific gene 1-like protein (331 aa).

At 1-8 the chain is on the cytoplasmic side; sequence MKTSRRGR. A helical membrane pass occupies residues 9-29; sequence ALLAVALNLLALLFATTAFLT. Over 30 to 132 the chain is Extracellular; that stretch reads THWCQGTQRV…FIDLAPASEK (103 aa). A helical membrane pass occupies residues 133 to 153; that stretch reads GVLWLSVVSEVLYILLLVVGF. Topologically, residues 154–173 are cytoplasmic; the sequence is SLMCLELFHSSNVIDGLKLN. A helical membrane pass occupies residues 174–194; the sequence is AFAAVFTVLSGLLGMVAHMMY. Residues 195-217 are Extracellular-facing; it reads TQVFQVTVSLGPEDWRPHSWDYG. Residues 218–238 form a helical membrane-spanning segment; it reads WSFCLAWGSFTCCMAASVTTL. The Cytoplasmic segment spans residues 239–331; the sequence is NSYTKTVIEF…RQCWVLGHWV (93 aa).

Belongs to the GSG1 family. Component of the inner core of AMPAR complex. AMPAR complex consists of an inner core made of 4 pore-forming GluA/GRIA proteins (GRIA1, GRIA2, GRIA3 and GRIA4) and 4 major auxiliary subunits arranged in a twofold symmetry. One of the two pairs of distinct binding sites is occupied either by CNIH2, CNIH3 or CACNG2, CACNG3. The other harbors CACNG2, CACNG3, CACNG4, CACNG8 or GSG1L. This inner core of AMPAR complex is complemented by outer core constituents binding directly to the GluA/GRIA proteins at sites distinct from the interaction sites of the inner core constituents. Outer core constituents include at least PRRT1, PRRT2, CKAMP44/SHISA9, FRRS1L and NRN1. The proteins of the inner and outer core serve as a platform for other, more peripherally associated AMPAR constituents. Alone or in combination, these auxiliary subunits control the gating and pharmacology of the AMPAR complex and profoundly impact their biogenesis and protein processing.

Its subcellular location is the cell membrane. The protein localises to the synapse. Functionally, as a component of the inner core of AMPAR complex, modifies AMPA receptor (AMPAR) gating. This Homo sapiens (Human) protein is Germ cell-specific gene 1-like protein (GSG1L).